Consider the following 123-residue polypeptide: TYMS opposite strand protein (123 aa).

The interval 57–111 (MRPLPRRIEVRTKRGPQRPAAPERSPQPRLPPSRHPSRRGPRRHLSGCSAPACRI) is disordered. Residues 91–101 (HPSRRGPRRHL) show a composition bias toward basic residues.

In Homo sapiens (Human), this protein is TYMS opposite strand protein (TYMSOS).